The sequence spans 317 residues: SURF1-like protein (317 aa).

The next 2 helical transmembrane spans lie at 78-98 (GSILMLGLPAFAFSLGVWQIY) and 293-313 (HMNYLTTWFTLTLVTMLMWIH).

Belongs to the SURF1 family.

The protein localises to the mitochondrion inner membrane. Functionally, probably involved in the biogenesis of the COX complex. The sequence is that of SURF1-like protein (sft-1) from Caenorhabditis briggsae.